The following is a 313-amino-acid chain: Formimidoylglutamase (313 aa).

Mn(2+) contacts are provided by His-130, Asp-155, His-157, Asp-159, Asp-241, and Asp-243.

Belongs to the arginase family. Mn(2+) is required as a cofactor.

The catalysed reaction is N-formimidoyl-L-glutamate + H2O = formamide + L-glutamate. The protein operates within amino-acid degradation; L-histidine degradation into L-glutamate; L-glutamate from N-formimidoyl-L-glutamate (hydrolase route): step 1/1. Catalyzes the conversion of N-formimidoyl-L-glutamate to L-glutamate and formamide. In Salmonella enteritidis PT4 (strain P125109), this protein is Formimidoylglutamase.